Here is a 561-residue protein sequence, read N- to C-terminus: Mercuric reductase (561 aa).

An HMA domain is found at 1–65; that stretch reads MTTLKITGMT…AVAGLGYEAT (65 aa). Residues cysteine 11 and cysteine 14 each contribute to the a metal cation site. Residues alanine 110, glycine 130, and threonine 135 each contribute to the FAD site. A disulfide bridge links cysteine 136 with cysteine 141. Residues lysine 145, alanine 211, aspartate 403, and valine 411 each contribute to the FAD site. Positions 558 and 559 each coordinate Hg(2+).

Belongs to the class-I pyridine nucleotide-disulfide oxidoreductase family. Homodimer. The cofactor is FAD.

It carries out the reaction Hg + NADP(+) + H(+) = Hg(2+) + NADPH. Resistance to Hg(2+) in bacteria appears to be governed by a specialized system which includes mercuric reductase. MerA protein is responsible for volatilizing mercury as Hg(0). This is Mercuric reductase (merA) from Enterobacter agglomerans (Erwinia herbicola).